Consider the following 395-residue polypeptide: Ribosomal RNA large subunit methyltransferase G (395 aa).

This sequence belongs to the methyltransferase superfamily. RlmG family.

The protein resides in the cytoplasm. The enzyme catalyses guanosine(1835) in 23S rRNA + S-adenosyl-L-methionine = N(2)-methylguanosine(1835) in 23S rRNA + S-adenosyl-L-homocysteine + H(+). Its function is as follows. Specifically methylates the guanine in position 1835 (m2G1835) of 23S rRNA. The sequence is that of Ribosomal RNA large subunit methyltransferase G from Yersinia pestis (strain Pestoides F).